The sequence spans 342 residues: L-threonine 3-dehydrogenase (342 aa).

Residue C38 participates in Zn(2+) binding. Active-site charge relay system residues include T40 and H43. 6 residues coordinate Zn(2+): H63, E64, C93, C96, C99, and C107. NAD(+)-binding positions include I175, D195, R200, 262–264 (LGI), and 286–287 (IY).

This sequence belongs to the zinc-containing alcohol dehydrogenase family. Homotetramer. It depends on Zn(2+) as a cofactor.

The protein resides in the cytoplasm. The enzyme catalyses L-threonine + NAD(+) = (2S)-2-amino-3-oxobutanoate + NADH + H(+). Its pathway is amino-acid degradation; L-threonine degradation via oxydo-reductase pathway; glycine from L-threonine: step 1/2. In terms of biological role, catalyzes the NAD(+)-dependent oxidation of L-threonine to 2-amino-3-ketobutyrate. The polypeptide is L-threonine 3-dehydrogenase (Burkholderia ambifaria (strain MC40-6)).